A 780-amino-acid chain; its full sequence is Semaphorin-3G (780 aa).

The signal sequence occupies residues 1 to 22 (MDPSAWAICCLLGSLLFHVGIP). The Sema domain occupies 32–519 (RLRLSYRDLL…SPLGVARLQL (488 aa)). An N-linked (GlcNAc...) asparagine glycan is attached at Asn44. Cysteines 105 and 116 form a disulfide. Residue Asn127 is glycosylated (N-linked (GlcNAc...) asparagine). Cystine bridges form between Cys134–Cys143, Cys270–Cys382, Cys294–Cys342, Cys522–Cys540, and Cys603–Cys655. The Ig-like C2-type domain maps to 569-671 (PAVQCLGQGQ…FSQTVVRFAL (103 aa)). An N-linked (GlcNAc...) asparagine glycan is attached at Asn652.

The protein belongs to the semaphorin family. As to expression, highly expressed in lung and kidney. Weakly expressed in brain.

Its subcellular location is the secreted. Its function is as follows. Has chemorepulsive activities for sympathetic axons. Ligand of NRP2. This chain is Semaphorin-3G (Sema3g), found in Mus musculus (Mouse).